A 178-amino-acid polypeptide reads, in one-letter code: CASP-like protein 5A1 (178 aa).

The segment at 1–24 (MFASRPAVHPVEAPPPTDPVEQPT) is disordered. The Cytoplasmic portion of the chain corresponds to 1–37 (MFASRPAVHPVEAPPPTDPVEQPTGVLMKDLPGMPGT). The chain crosses the membrane as a helical span at residues 38-58 (AGGLGLRVAQFVFAGVALAVM). Residues 59-69 (ASTSDFPSVTA) lie on the Extracellular side of the membrane. A helical membrane pass occupies residues 70-90 (FCYLVAATIMQCLWSFSLAIV). The Cytoplasmic portion of the chain corresponds to 91 to 105 (DIYALLVKRCLRNRR). The helical transmembrane segment at 106–126 (AVCLFAIGDGITAALTFGAAC) threads the bilayer. Residues 127 to 152 (SSAGITVLIDNDLNICAENHCGSFKT) are Extracellular-facing. The chain crosses the membrane as a helical span at residues 153–173 (ATALAFMSWFALTPSFLLNFW). The Cytoplasmic segment spans residues 174 to 178 (SMAAR).

It belongs to the Casparian strip membrane proteins (CASP) family. Homodimer and heterodimers.

The protein localises to the cell membrane. The protein is CASP-like protein 5A1 of Brachypodium distachyon (Purple false brome).